Here is a 453-residue protein sequence, read N- to C-terminus: Ribulose bisphosphate carboxylase large chain (453 aa).

Positions 1 to 2 are excised as a propeptide; that stretch reads MS. Position 3 is an N-acetylproline (proline 3). Lysine 14 is modified (N6,N6,N6-trimethyllysine). Substrate-binding residues include asparagine 123 and threonine 173. Lysine 175 (proton acceptor) is an active-site residue. Lysine 177 contacts substrate. Mg(2+)-binding residues include lysine 201, aspartate 203, and glutamate 204. Position 201 is an N6-carboxylysine (lysine 201). Histidine 294 functions as the Proton acceptor in the catalytic mechanism. Residues arginine 295, histidine 327, and serine 379 each contribute to the substrate site.

The protein belongs to the RuBisCO large chain family. Type I subfamily. In terms of assembly, heterohexadecamer of 8 large chains and 8 small chains; disulfide-linked. The disulfide link is formed within the large subunit homodimers. Requires Mg(2+) as cofactor. In terms of processing, the disulfide bond which can form in the large chain dimeric partners within the hexadecamer appears to be associated with oxidative stress and protein turnover.

The protein localises to the plastid. The protein resides in the chloroplast. It carries out the reaction 2 (2R)-3-phosphoglycerate + 2 H(+) = D-ribulose 1,5-bisphosphate + CO2 + H2O. It catalyses the reaction D-ribulose 1,5-bisphosphate + O2 = 2-phosphoglycolate + (2R)-3-phosphoglycerate + 2 H(+). In terms of biological role, ruBisCO catalyzes two reactions: the carboxylation of D-ribulose 1,5-bisphosphate, the primary event in carbon dioxide fixation, as well as the oxidative fragmentation of the pentose substrate in the photorespiration process. Both reactions occur simultaneously and in competition at the same active site. The protein is Ribulose bisphosphate carboxylase large chain of Galium lucidum.